The following is a 226-amino-acid chain: ATP synthase F(0) complex subunit a (226 aa).

A run of 6 helical transmembrane segments spans residues Ala-11 to Ile-31, Trp-68 to Leu-88, Gln-97 to Leu-117, Ile-138 to Val-158, Ile-164 to Ile-184, and Val-194 to Phe-214.

The protein belongs to the ATPase A chain family. Component of the ATP synthase complex composed at least of ATP5F1A/subunit alpha, ATP5F1B/subunit beta, ATP5MC1/subunit c (homooctomer), MT-ATP6/subunit a, MT-ATP8/subunit 8, ATP5ME/subunit e, ATP5MF/subunit f, ATP5MG/subunit g, ATP5MK/subunit k, ATP5MJ/subunit j, ATP5F1C/subunit gamma, ATP5F1D/subunit delta, ATP5F1E/subunit epsilon, ATP5PF/subunit F6, ATP5PB/subunit b, ATP5PD/subunit d, ATP5PO/subunit OSCP. ATP synthase complex consists of a soluble F(1) head domain (subunits alpha(3) and beta(3)) - the catalytic core - and a membrane F(0) domain - the membrane proton channel (subunits c, a, 8, e, f, g, k and j). These two domains are linked by a central stalk (subunits gamma, delta, and epsilon) rotating inside the F1 region and a stationary peripheral stalk (subunits F6, b, d, and OSCP). Interacts with DNAJC30; interaction is direct.

It is found in the mitochondrion inner membrane. The enzyme catalyses H(+)(in) = H(+)(out). Subunit a, of the mitochondrial membrane ATP synthase complex (F(1)F(0) ATP synthase or Complex V) that produces ATP from ADP in the presence of a proton gradient across the membrane which is generated by electron transport complexes of the respiratory chain. ATP synthase complex consist of a soluble F(1) head domain - the catalytic core - and a membrane F(1) domain - the membrane proton channel. These two domains are linked by a central stalk rotating inside the F(1) region and a stationary peripheral stalk. During catalysis, ATP synthesis in the catalytic domain of F(1) is coupled via a rotary mechanism of the central stalk subunits to proton translocation. With the subunit c (ATP5MC1), forms the proton-conducting channel in the F(0) domain, that contains two crucial half-channels (inlet and outlet) that facilitate proton movement from the mitochondrial intermembrane space (IMS) into the matrix. Protons are taken up via the inlet half-channel and released through the outlet half-channel, following a Grotthuss mechanism. The chain is ATP synthase F(0) complex subunit a from Papio hamadryas (Hamadryas baboon).